The chain runs to 151 residues: MHALQAKILDPRLGQEFPLPQYATPGSAGLDLRAMLKEDIVLEPGQTVLIPTGLSIYIGDPGLAAMILPRSGLGHKHGIVLGNLVGLIDSDYQGELMVSCWNRGHTPFTIAIGERIAQLVLVPVVQAHFELVEQFDETQRGAGGFGHSGSH.

Substrate is bound by residues 70–72, asparagine 83, 87–89, and methionine 97; these read RSG and LID.

It belongs to the dUTPase family. Requires Mg(2+) as cofactor.

It catalyses the reaction dUTP + H2O = dUMP + diphosphate + H(+). The protein operates within pyrimidine metabolism; dUMP biosynthesis; dUMP from dCTP (dUTP route): step 2/2. Functionally, this enzyme is involved in nucleotide metabolism: it produces dUMP, the immediate precursor of thymidine nucleotides and it decreases the intracellular concentration of dUTP so that uracil cannot be incorporated into DNA. In Ectopseudomonas mendocina (strain ymp) (Pseudomonas mendocina), this protein is Deoxyuridine 5'-triphosphate nucleotidohydrolase.